We begin with the raw amino-acid sequence, 562 residues long: Solute carrier family 22 member 6 (562 aa).

The Cytoplasmic portion of the chain corresponds to 1–15; it reads MPFSELLEQVGSTGR. Residues 16-36 traverse the membrane as a helical segment; sequence FQVLHVTLLCIPVLMMASHNL. Residues 37 to 147 lie on the Extracellular side of the membrane; that stretch reads LQNFVATVPS…LVCDMHSFKQ (111 aa). A helical membrane pass occupies residues 148–168; sequence MGQTIYMGGVLVGALLFGGLS. The Cytoplasmic portion of the chain corresponds to 169–174; the sequence is DRYGRR. A helical membrane pass occupies residues 175–195; it reads ILLLISNLLMAVSGTCAAFSS. Topologically, residues 196–205 are extracellular; the sequence is SFSLFCVFRF. The chain crosses the membrane as a helical span at residues 206 to 226; that stretch reads GCGLALSGLGLNTFSLIVEWI. Residues 227–235 lie on the Cytoplasmic side of the membrane; that stretch reads PTRIRTAVG. The chain crosses the membrane as a helical span at residues 236-256; sequence TTTGYCYTLGQLILVLLAYFI. The Extracellular portion of the chain corresponds to 257–260; it reads RDWR. A helical transmembrane segment spans residues 261–281; that stretch reads WLTLAVSLPFYVFFLIAWWFH. Over 282–351 the chain is Cytoplasmic; that stretch reads ESSRWLALSN…FNTPAMRKRT (70 aa). Residues 352 to 372 form a helical membrane-spanning segment; sequence LCLSAVWLSTSFAYYGLAMDL. Topologically, residues 373 to 378 are extracellular; sequence DKFGVD. Residues 379 to 399 form a helical membrane-spanning segment; the sequence is IYLIQVIFGAVDIPAKVVVVV. Residues 400-408 lie on the Cytoplasmic side of the membrane; sequence SMSLIGRRR. Residues 409–429 traverse the membrane as a helical segment; that stretch reads SQCAVLVVAGITILLNLLVPY. The Extracellular portion of the chain corresponds to 430 to 444; sequence DKQTIRTCLAVLGKG. Residues 445-465 traverse the membrane as a helical segment; it reads CLAASFNCCYLYSGELFPTII. Residues 466 to 468 are Cytoplasmic-facing; the sequence is RQN. Residues 469 to 489 traverse the membrane as a helical segment; sequence GMGWVSMMARIGAMVAPMVLL. Over 490 to 495 the chain is Extracellular; the sequence is TRDYIP. A helical membrane pass occupies residues 496–516; that stretch reads WLPGLIYGGAPILSGLAAIFL. The Cytoplasmic segment spans residues 517 to 562; that stretch reads PETLGYPLPDTIQDVEESGSGRKSKMSTKETITLQDKQANLLKQSA.

The protein belongs to the major facilitator (TC 2.A.1) superfamily. Organic cation transporter (TC 2.A.1.19) family. Post-translationally, glycosylated. Glycosylation is necessary for proper targeting of the transporter to the plasma membrane.

Its subcellular location is the cell membrane. It localises to the basolateral cell membrane. The protein resides in the basal cell membrane. Involved in the renal elimination of endogenous and exogenous organic anions. Functions as organic anion exchanger when the uptake of one molecule of organic anion is coupled with an efflux of one molecule of endogenous dicarboxylic acid (glutarate, ketoglutarate, etc). Mediates the sodium-independent uptake of p-aminohippurate (PAH), 2,3-dimercapto-1-propanesulfonic acid (DMPS), cidofovir, adefovir, 9-(2-phosphonylmethoxyethyl) guanine (PMEG), 9-(2-phosphonylmethoxyethyl) diaminopurine (PMEDAP), ochratoxin (OTA), acyclovir (ACV), 3'-azido-3-'deoxythymidine (AZT), cimetidine (CMD), 2,4-dichloro-phenoxyacetate (2,4-D), hippurate (HA), indoleacetate (IA), indoxyl sulfate (IS), 3-carboxy-4-methyl-5-propyl-2-furanpropionate (CMPF) and edaravone sulfate. Mediates the sodium-independent uptake of p-aminohippurate (PAH). PAH uptake is inhibited by p-chloromercuribenzenesulphonate (PCMBS), diethyl pyrocarbonate (DEPC), indomethacin, sulindac, diclofenac, carprofen, okadaic acid, benzothiazolylcysteine (BTC), S-chlorotrifluoroethylcysteine (CTFC), cysteine S-conjugates S-dichlorovinylcysteine (DCVC), furosemide, steviol, phorbol 12-myristate 13-acetate (PMA), calcium ionophore A23187, benzylpenicillin, bumetamide, losartan, probenecid, phenol red, urate, glutarate and alpha-ketoglutarate. PAH uptake is inhibited by glutarate. This chain is Solute carrier family 22 member 6 (SLC22A6), found in Pseudopleuronectes americanus (Winter flounder).